Here is a 329-residue protein sequence, read N- to C-terminus: Phenylalanine--tRNA ligase alpha subunit (329 aa).

Position 253 (Glu-253) interacts with Mg(2+).

This sequence belongs to the class-II aminoacyl-tRNA synthetase family. Phe-tRNA synthetase alpha subunit type 1 subfamily. In terms of assembly, tetramer of two alpha and two beta subunits. It depends on Mg(2+) as a cofactor.

It is found in the cytoplasm. It carries out the reaction tRNA(Phe) + L-phenylalanine + ATP = L-phenylalanyl-tRNA(Phe) + AMP + diphosphate + H(+). This is Phenylalanine--tRNA ligase alpha subunit from Coxiella burnetii (strain CbuK_Q154) (Coxiella burnetii (strain Q154)).